The primary structure comprises 622 residues: Carbon monoxide dehydrogenase (622 aa).

The [4Fe-4S] cluster site is built by C40, C49, C52, C57, and C68. 5 residues coordinate [Ni-4Fe-5S] cluster: H256, C334, C442, C473, and C514.

Belongs to the Ni-containing carbon monoxide dehydrogenase family. As to quaternary structure, homodimer. Requires [4Fe-4S] cluster as cofactor. The cofactor is [Ni-4Fe-5S] cluster.

The catalysed reaction is CO + 2 oxidized [2Fe-2S]-[ferredoxin] + H2O = 2 reduced [2Fe-2S]-[ferredoxin] + CO2 + 2 H(+). Its function is as follows. CODH oxidizes carbon monoxide coupled, via CooF, to the reduction of a hydrogen cation by a hydrogenase (possibly CooH). This chain is Carbon monoxide dehydrogenase (cooS), found in Archaeoglobus fulgidus (strain ATCC 49558 / DSM 4304 / JCM 9628 / NBRC 100126 / VC-16).